We begin with the raw amino-acid sequence, 227 residues long: Lectin (227 aa).

The N-terminal stretch at 1–28 (MTMTSTTTKAMAMAAAVLAAAAVAATNA) is a signal peptide. A Pyrrolidone carboxylic acid modification is found at Gln29. Chitin-binding type-1 domains lie at 29–70 (QTCG…ACCS), 71–113 (SQRC…PCRA), 114–156 (DIKC…ACCP), and 157–199 (EKRC…GCYK). Disulfide bonds link Cys31–Cys46, Cys40–Cys52, Cys45–Cys59, Cys63–Cys68, Cys74–Cys89, Cys83–Cys95, Cys88–Cys102, Cys106–Cys111, Cys117–Cys132, Cys126–Cys138, Cys131–Cys145, Cys149–Cys154, Cys160–Cys175, Cys169–Cys181, Cys174–Cys188, and Cys192–Cys197. A substrate-binding site is contributed by 38 to 40 (MIC). 90–101 (SQYGYCGFGSEY) is a substrate binding site. Residue 142–143 (SE) participates in substrate binding. Positions 202–227 (DGMAAILANNQSVSFEGIIESVAELV) are excised as a propeptide. A glycan (N-linked (GlcNAc...) asparagine) is linked at Asn211.

In terms of tissue distribution, confined to root caps, several cell layers at the periphery of the coleorhiza and radicle, and in all cell layers of the coleoptile.

Its function is as follows. N-acetyl-D-glucosamine binding lectin. The protein is Lectin of Oryza sativa subsp. japonica (Rice).